The primary structure comprises 202 residues: Orotate phosphoribosyltransferase (202 aa).

113–121 (EDIITTGGS) is a binding site for 5-phospho-alpha-D-ribose 1-diphosphate. Residues threonine 117 and arginine 145 each contribute to the orotate site.

The protein belongs to the purine/pyrimidine phosphoribosyltransferase family. PyrE subfamily. Homodimer. It depends on Mg(2+) as a cofactor.

It carries out the reaction orotidine 5'-phosphate + diphosphate = orotate + 5-phospho-alpha-D-ribose 1-diphosphate. It functions in the pathway pyrimidine metabolism; UMP biosynthesis via de novo pathway; UMP from orotate: step 1/2. Catalyzes the transfer of a ribosyl phosphate group from 5-phosphoribose 1-diphosphate to orotate, leading to the formation of orotidine monophosphate (OMP). The polypeptide is Orotate phosphoribosyltransferase (Campylobacter lari (strain RM2100 / D67 / ATCC BAA-1060)).